Reading from the N-terminus, the 176-residue chain is RNA pyrophosphohydrolase (176 aa).

In terms of domain architecture, Nudix hydrolase spans 6–149; it reads GYRPNVGIVI…KRDVYRRVMK (144 aa). The Nudix box signature appears at 38-59; that stretch reads GGINPGESAEQAMYRELFEEVG.

This sequence belongs to the Nudix hydrolase family. RppH subfamily. Requires a divalent metal cation as cofactor.

Its function is as follows. Accelerates the degradation of transcripts by removing pyrophosphate from the 5'-end of triphosphorylated RNA, leading to a more labile monophosphorylated state that can stimulate subsequent ribonuclease cleavage. The polypeptide is RNA pyrophosphohydrolase (Klebsiella pneumoniae (strain 342)).